Reading from the N-terminus, the 1755-residue chain is Transposon Ty1-ML2 Gag-Pol polyprotein (1755 aa).

The segment covering Met-1–Ser-16 has biased composition (low complexity). Disordered stretches follow at residues Met-1–Gln-93, Pro-126–Pro-173, and Gly-352–Thr-421. Composition is skewed to polar residues over residues Thr-48 to Ser-60 and Gln-127 to Phe-152. The span at Thr-153 to Thr-165 shows a compositional bias: low complexity. The tract at residues Asn-299–His-401 is RNA-binding. Residues Asn-402–Ser-418 show a composition bias toward low complexity. Ser-416 carries the phosphoserine modification. Residue Asp-461 is the For protease activity; shared with dimeric partner of the active site. The integrase-type zinc finger-like stretch occupies residues Asn-583–Cys-640. One can recognise an Integrase catalytic domain in the interval Asn-660 to Pro-835. Positions 671 and 736 each coordinate Mg(2+). Disordered regions lie at residues Ser-956–Lys-1087, Arg-1092–Pro-1111, and Asp-1130–Ala-1171. Positions Ser-960 to Thr-969 are enriched in low complexity. Residues Ser-1005–Thr-1015 show a composition bias toward polar residues. A compositionally biased stretch (basic and acidic residues) spans Glu-1038–Ser-1053. 2 stretches are compositionally biased toward polar residues: residues Tyr-1054 to Asp-1082 and Pro-1101 to Pro-1111. The Bipartite nuclear localization signal signature appears at Lys-1178–Arg-1212. The 139-residue stretch at Asn-1338 to Gln-1476 folds into the Reverse transcriptase Ty1/copia-type domain. Mg(2+) contacts are provided by Asp-1346, Asp-1427, Asp-1428, Asp-1610, Glu-1652, and Asp-1685. The RNase H Ty1/copia-type domain maps to Asp-1610 to Lys-1752.

In terms of assembly, the capsid protein forms a homotrimer, from which the VLPs are assembled. The protease is a homodimer, whose active site consists of two apposed aspartic acid residues. Post-translationally, initially, virus-like particles (VLPs) are composed of the structural unprocessed proteins Gag and Gag-Pol, and also contain the host initiator methionine tRNA (tRNA(i)-Met) which serves as a primer for minus-strand DNA synthesis, and a dimer of genomic Ty RNA. Processing of the polyproteins occurs within the particle and proceeds by an ordered pathway, called maturation. First, the protease (PR) is released by autocatalytic cleavage of the Gag-Pol polyprotein yielding capsid protein p45 and a Pol-p154 precursor protein. This cleavage is a prerequisite for subsequent processing of Pol-p154 at the remaining sites to release the mature structural and catalytic proteins. Maturation takes place prior to the RT reaction and is required to produce transposition-competent VLPs.

The protein resides in the cytoplasm. Its subcellular location is the nucleus. The enzyme catalyses DNA(n) + a 2'-deoxyribonucleoside 5'-triphosphate = DNA(n+1) + diphosphate. It carries out the reaction Endonucleolytic cleavage to 5'-phosphomonoester.. In terms of biological role, capsid protein (CA) is the structural component of the virus-like particle (VLP), forming the shell that encapsulates the retrotransposons dimeric RNA genome. The particles are assembled from trimer-clustered units and there are holes in the capsid shells that allow for the diffusion of macromolecules. CA also has nucleocapsid-like chaperone activity, promoting primer tRNA(i)-Met annealing to the multipartite primer-binding site (PBS), dimerization of Ty1 RNA and initiation of reverse transcription. Its function is as follows. The aspartyl protease (PR) mediates the proteolytic cleavages of the Gag and Gag-Pol polyproteins after assembly of the VLP. Functionally, reverse transcriptase/ribonuclease H (RT) is a multifunctional enzyme that catalyzes the conversion of the retro-elements RNA genome into dsDNA within the VLP. The enzyme displays a DNA polymerase activity that can copy either DNA or RNA templates, and a ribonuclease H (RNase H) activity that cleaves the RNA strand of RNA-DNA heteroduplexes during plus-strand synthesis and hydrolyzes RNA primers. The conversion leads to a linear dsDNA copy of the retrotransposon that includes long terminal repeats (LTRs) at both ends. Integrase (IN) targets the VLP to the nucleus, where a subparticle preintegration complex (PIC) containing at least integrase and the newly synthesized dsDNA copy of the retrotransposon must transit the nuclear membrane. Once in the nucleus, integrase performs the integration of the dsDNA into the host genome. The chain is Transposon Ty1-ML2 Gag-Pol polyprotein (TY1B-ML2) from Saccharomyces cerevisiae (strain ATCC 204508 / S288c) (Baker's yeast).